The chain runs to 95 residues: Secretoglobin family 1C member 1 (95 aa).

The first 23 residues, 1–23 (MKGSSALLLVALSLLCVCGLTRA), serve as a signal peptide directing secretion.

The protein belongs to the secretoglobin family.

Its subcellular location is the secreted. The chain is Secretoglobin family 1C member 1 (Scgb1c1) from Mus musculus (Mouse).